The chain runs to 82 residues: KSIFERDRRDWLVIPDAIAAYIYETVNKMSPRVGQFLADAAQTPVVVGTRTFLIRETSKLTLLAEQLMEKIKNLWYTKVLGY.

This sequence belongs to the apovitellenin family. Monomer. Found in egg yolk and in plasma.

In terms of biological role, protein component of the very low density lipoprotein (VLDL) of egg-laying females. Potent lipoprotein lipase inhibitor, preventing the loss of triglycerides from VLDL on their way from the liver to the growing oocytes. The chain is Apovitellenin-1 from Anas platyrhynchos (Mallard).